Here is a 452-residue protein sequence, read N- to C-terminus: tRNA(Ile)-lysidine synthase (452 aa).

27 to 32 (SGGIDS) contributes to the ATP binding site.

This sequence belongs to the tRNA(Ile)-lysidine synthase family.

Its subcellular location is the cytoplasm. It carries out the reaction cytidine(34) in tRNA(Ile2) + L-lysine + ATP = lysidine(34) in tRNA(Ile2) + AMP + diphosphate + H(+). Ligates lysine onto the cytidine present at position 34 of the AUA codon-specific tRNA(Ile) that contains the anticodon CAU, in an ATP-dependent manner. Cytidine is converted to lysidine, thus changing the amino acid specificity of the tRNA from methionine to isoleucine. This Persephonella marina (strain DSM 14350 / EX-H1) protein is tRNA(Ile)-lysidine synthase.